The following is a 452-amino-acid chain: tRNA modification GTPase MnmE (452 aa).

(6S)-5-formyl-5,6,7,8-tetrahydrofolate contacts are provided by arginine 21, glutamate 78, and lysine 118. Residues 214 to 375 (GMKVVIAGRP…LREHLKKSMG (162 aa)) enclose the TrmE-type G domain. Asparagine 224 lines the K(+) pocket. Residues 224–229 (NAGKSS), 243–249 (TNIAGTT), and 268–271 (DTAG) each bind GTP. Serine 228 provides a ligand contact to Mg(2+). 3 residues coordinate K(+): threonine 243, isoleucine 245, and threonine 248. Residue threonine 249 participates in Mg(2+) binding. A (6S)-5-formyl-5,6,7,8-tetrahydrofolate-binding site is contributed by lysine 452.

This sequence belongs to the TRAFAC class TrmE-Era-EngA-EngB-Septin-like GTPase superfamily. TrmE GTPase family. Homodimer. Heterotetramer of two MnmE and two MnmG subunits. K(+) serves as cofactor.

The protein resides in the cytoplasm. Its function is as follows. Exhibits a very high intrinsic GTPase hydrolysis rate. Involved in the addition of a carboxymethylaminomethyl (cmnm) group at the wobble position (U34) of certain tRNAs, forming tRNA-cmnm(5)s(2)U34. This Actinobacillus pleuropneumoniae serotype 5b (strain L20) protein is tRNA modification GTPase MnmE.